The following is a 475-amino-acid chain: tRNA-dihydrouridine(16/17) synthase [NAD(P)(+)]-like (475 aa).

FMN contacts are provided by residues 23–25 and Gln-79; that span reads PMV. The active-site Proton donor is Cys-108. FMN-binding positions include Lys-147, His-175, 208–210, and 232–233; these read NGN and AE. The tract at residues 343-388 is disordered; that stretch reads GPREGSKENSGGRSKRALEEEEGSMEGLSKNKLKKQLRNPHKTFDP. The segment covering 373–383 has biased composition (basic residues); the sequence is NKLKKQLRNPH.

It belongs to the Dus family. Dus1 subfamily. It depends on FMN as a cofactor.

It is found in the cytoplasm. The protein localises to the nucleus. It catalyses the reaction 5,6-dihydrouridine(16) in tRNA + NADP(+) = uridine(16) in tRNA + NADPH + H(+). It carries out the reaction 5,6-dihydrouridine(16) in tRNA + NAD(+) = uridine(16) in tRNA + NADH + H(+). The enzyme catalyses 5,6-dihydrouridine(17) in tRNA + NAD(+) = uridine(17) in tRNA + NADH + H(+). The catalysed reaction is 5,6-dihydrouridine(17) in tRNA + NADP(+) = uridine(17) in tRNA + NADPH + H(+). In terms of biological role, catalyzes the synthesis of dihydrouridine, a modified base found in the D-loop of most tRNAs. Specifically modifies U16 and U17 in cytoplasmic tRNAs. Affects the level of some mature tRNA and thereby the total cellular translation. The chain is tRNA-dihydrouridine(16/17) synthase [NAD(P)(+)]-like (Dus1l) from Mus musculus (Mouse).